The primary structure comprises 376 residues: Succinyl-diaminopimelate desuccinylase (376 aa).

His-67 lines the Zn(2+) pocket. Asp-69 is an active-site residue. Asp-100 is a Zn(2+) binding site. Glu-134 serves as the catalytic Proton acceptor. Residues Glu-135, Glu-163, and His-349 each contribute to the Zn(2+) site.

The protein belongs to the peptidase M20A family. DapE subfamily. In terms of assembly, homodimer. Zn(2+) is required as a cofactor. It depends on Co(2+) as a cofactor.

The enzyme catalyses N-succinyl-(2S,6S)-2,6-diaminopimelate + H2O = (2S,6S)-2,6-diaminopimelate + succinate. It participates in amino-acid biosynthesis; L-lysine biosynthesis via DAP pathway; LL-2,6-diaminopimelate from (S)-tetrahydrodipicolinate (succinylase route): step 3/3. Functionally, catalyzes the hydrolysis of N-succinyl-L,L-diaminopimelic acid (SDAP), forming succinate and LL-2,6-diaminopimelate (DAP), an intermediate involved in the bacterial biosynthesis of lysine and meso-diaminopimelic acid, an essential component of bacterial cell walls. This is Succinyl-diaminopimelate desuccinylase from Pseudoalteromonas translucida (strain TAC 125).